The sequence spans 369 residues: Probable serine/threonine-protein kinase FMP48 (369 aa).

Residues 2–369 (YTKLRSIQSG…EKPCLIQDGK (368 aa)) enclose the Protein kinase domain. ATP contacts are provided by residues 8-16 (IQSGTFSTV) and Lys-31. The active-site Proton acceptor is Asp-133.

The protein belongs to the protein kinase superfamily. Ser/Thr protein kinase family.

It is found in the mitochondrion. It catalyses the reaction L-seryl-[protein] + ATP = O-phospho-L-seryl-[protein] + ADP + H(+). The catalysed reaction is L-threonyl-[protein] + ATP = O-phospho-L-threonyl-[protein] + ADP + H(+). This is Probable serine/threonine-protein kinase FMP48 (FMP48) from Saccharomyces cerevisiae (strain ATCC 204508 / S288c) (Baker's yeast).